We begin with the raw amino-acid sequence, 327 residues long: Ferrochelatase (327 aa).

Positions 196 and 277 each coordinate Fe cation.

This sequence belongs to the ferrochelatase family.

It is found in the cytoplasm. It catalyses the reaction heme b + 2 H(+) = protoporphyrin IX + Fe(2+). Its pathway is porphyrin-containing compound metabolism; protoheme biosynthesis; protoheme from protoporphyrin-IX: step 1/1. Catalyzes the ferrous insertion into protoporphyrin IX. The sequence is that of Ferrochelatase from Gloeobacter violaceus (strain ATCC 29082 / PCC 7421).